The chain runs to 276 residues: Diaminopimelate epimerase (276 aa).

Residues Asn13, Gln46, and Asn66 each contribute to the substrate site. Cys75 functions as the Proton donor in the catalytic mechanism. Residues 76 to 77 (GN), Asn159, Asn192, and 210 to 211 (ER) each bind substrate. Cys219 serves as the catalytic Proton acceptor. 220–221 (GT) provides a ligand contact to substrate.

This sequence belongs to the diaminopimelate epimerase family. Homodimer.

The protein localises to the cytoplasm. It carries out the reaction (2S,6S)-2,6-diaminopimelate = meso-2,6-diaminopimelate. Its pathway is amino-acid biosynthesis; L-lysine biosynthesis via DAP pathway; DL-2,6-diaminopimelate from LL-2,6-diaminopimelate: step 1/1. Its function is as follows. Catalyzes the stereoinversion of LL-2,6-diaminopimelate (L,L-DAP) to meso-diaminopimelate (meso-DAP), a precursor of L-lysine and an essential component of the bacterial peptidoglycan. The chain is Diaminopimelate epimerase from Azotobacter vinelandii (strain DJ / ATCC BAA-1303).